The chain runs to 603 residues: Isovalerate--CoA ligase AAE2 (603 aa).

It belongs to the ATP-dependent AMP-binding enzyme family. As to expression, expressed at low levels in leaves, flowers and developing seeds.

It carries out the reaction 3-methylbutanoate + ATP + CoA = 3-methylbutanoyl-CoA + AMP + diphosphate. It catalyses the reaction hexanoate + ATP + CoA = hexanoyl-CoA + AMP + diphosphate. The enzyme catalyses butanoate + ATP + CoA = butanoyl-CoA + AMP + diphosphate. The catalysed reaction is pentanoate + ATP + CoA = pentanoyl-CoA + AMP + diphosphate. It carries out the reaction 3-methylpentanoate + ATP + CoA = 3-methylpentanoyl-CoA + AMP + diphosphate. It catalyses the reaction 4-methylpentanoate + ATP + CoA = 4-methylpentanoyl-CoA + AMP + diphosphate. Its function is as follows. Catalyzes the ligation of CoA on isovalerate to produce 3-methylbutanoyl-CoA. Can also use butanoate, pentanoate, hexanoate, 3-methylpentanoate and 4-methylpentanoate as substrates with a lower efficiency. The protein is Isovalerate--CoA ligase AAE2 of Arabidopsis thaliana (Mouse-ear cress).